We begin with the raw amino-acid sequence, 159 residues long: NADH dehydrogenase [ubiquinone] 1 beta subcomplex subunit 10 (159 aa).

This sequence belongs to the complex I NDUFB10 subunit family. As to quaternary structure, complex I is composed of 45 different subunits.

The protein resides in the mitochondrion inner membrane. In terms of biological role, accessory subunit of the mitochondrial membrane respiratory chain NADH dehydrogenase (Complex I), that is believed not to be involved in catalysis. Complex I functions in the transfer of electrons from NADH to the respiratory chain. The immediate electron acceptor for the enzyme is believed to be ubiquinone. This is NADH dehydrogenase [ubiquinone] 1 beta subcomplex subunit 10 from Bombyx mori (Silk moth).